The chain runs to 290 residues: Zinc finger protein-like 1 homolog (290 aa).

Residues methionine 1–tryptophan 43 form a B box-type; degenerate zinc finger. Residues cysteine 53–serine 101 form an RING-type; atypical zinc finger. The segment covering asparagine 156–arginine 168 has biased composition (polar residues). The interval asparagine 156–serine 175 is disordered. A helical membrane pass occupies residues tryptophan 249 to leucine 269.

This sequence belongs to the ZFPL1 family.

Its subcellular location is the membrane. This Aedes aegypti (Yellowfever mosquito) protein is Zinc finger protein-like 1 homolog.